The sequence spans 485 residues: Putative aldehyde dehydrogenase AldY (485 aa).

231–236 (GSTAVG) lines the NAD(+) pocket. Active-site residues include glutamate 253 and cysteine 287.

It belongs to the aldehyde dehydrogenase family.

The enzyme catalyses an aldehyde + NAD(+) + H2O = a carboxylate + NADH + 2 H(+). Functionally, may contribute to protect cells against stress due to ethanol and related compounds. This Bacillus subtilis (strain 168) protein is Putative aldehyde dehydrogenase AldY (aldY).